Here is a 316-residue protein sequence, read N- to C-terminus: tRNA dimethylallyltransferase (316 aa).

17–24 is an ATP binding site; sequence GPTASGKT. 19–24 contacts substrate; it reads TASGKT. Interaction with substrate tRNA stretches follow at residues 42–45, 166–170, 247–252, and 280–287; these read DSAL, QRLSR, RCVGYR, and KRQITWLR.

It belongs to the IPP transferase family. In terms of assembly, monomer. It depends on Mg(2+) as a cofactor.

The enzyme catalyses adenosine(37) in tRNA + dimethylallyl diphosphate = N(6)-dimethylallyladenosine(37) in tRNA + diphosphate. Functionally, catalyzes the transfer of a dimethylallyl group onto the adenine at position 37 in tRNAs that read codons beginning with uridine, leading to the formation of N6-(dimethylallyl)adenosine (i(6)A). The polypeptide is tRNA dimethylallyltransferase (Escherichia coli O45:K1 (strain S88 / ExPEC)).